Consider the following 224-residue polypeptide: 3-dehydroquinate dehydratase (224 aa).

3-dehydroquinate contacts are provided by residues 30–32 (EWR) and Arg-62. His-118 acts as the Proton donor/acceptor in catalysis. Lys-143 serves as the catalytic Schiff-base intermediate with substrate. Arg-186, Ser-205, and Gln-209 together coordinate 3-dehydroquinate.

It belongs to the type-I 3-dehydroquinase family. In terms of assembly, homodimer.

The catalysed reaction is 3-dehydroquinate = 3-dehydroshikimate + H2O. The protein operates within metabolic intermediate biosynthesis; chorismate biosynthesis; chorismate from D-erythrose 4-phosphate and phosphoenolpyruvate: step 3/7. Involved in the third step of the chorismate pathway, which leads to the biosynthesis of aromatic amino acids. Catalyzes the cis-dehydration of 3-dehydroquinate (DHQ) and introduces the first double bond of the aromatic ring to yield 3-dehydroshikimate. This is 3-dehydroquinate dehydratase from Streptococcus suis (strain 98HAH33).